A 283-amino-acid chain; its full sequence is Bifunctional protein FolD (283 aa).

NADP(+)-binding positions include 164–166 (GRS), Ser-189, and Ile-230.

This sequence belongs to the tetrahydrofolate dehydrogenase/cyclohydrolase family. As to quaternary structure, homodimer.

The catalysed reaction is (6R)-5,10-methylene-5,6,7,8-tetrahydrofolate + NADP(+) = (6R)-5,10-methenyltetrahydrofolate + NADPH. It catalyses the reaction (6R)-5,10-methenyltetrahydrofolate + H2O = (6R)-10-formyltetrahydrofolate + H(+). It functions in the pathway one-carbon metabolism; tetrahydrofolate interconversion. Catalyzes the oxidation of 5,10-methylenetetrahydrofolate to 5,10-methenyltetrahydrofolate and then the hydrolysis of 5,10-methenyltetrahydrofolate to 10-formyltetrahydrofolate. The chain is Bifunctional protein FolD from Lactobacillus delbrueckii subsp. bulgaricus (strain ATCC BAA-365 / Lb-18).